Reading from the N-terminus, the 278-residue chain is MCRRPDCGFSFSPGPVVLLWCCLLLPIVSSVAVSVAPTAAEKVPAECPELTRRCLLGEVFQGDKYESWLRPLVNVTGRDGPLSQLIRYRPVTPEAANSVLLDDAFLDTLALLYNNPDQLRALLTLLSSDTAPRWMTVMRGYSECGDGSPAVYTCVDDLCRGYDLTRLSYGRSIFTEHVLGFELVPPSLFNVVVAIRNEATRTNRAVRLPVSTAAAPEGITLFYGLYNAVKEFCLRHQLDPPLLRHLDKYYAGLPPELKQTRVNLPAHSRYGPQAVDAR.

Positions 1 to 30 (MCRRPDCGFSFSPGPVVLLWCCLLLPIVSS) are cleaved as a signal peptide. The 214-residue stretch at 43–256 (VPAECPELTR…DKYYAGLPPE (214 aa)) folds into the gL betaherpesvirus-type domain. Cys154 and Cys159 are joined by a disulfide.

The protein belongs to the herpesviridae glycoprotein L (gL) family. Betaherpesvirinae gL subfamily. As to quaternary structure, interacts with glycoprotein H (gH); this interaction is necessary for the correct processing and cell surface expression of gH. Forms the envelope pentamer complex (PC) composed of gH, gL, UL128, UL130, and UL131A. The pentamer interacts with host NRP2. Forms the envelope trimer complex composed of gH, gL, and gO. The trimer interacts with host PDGFRA. The trimer also interacts with host EPHA2.

It is found in the virion membrane. The protein resides in the host cell membrane. Its subcellular location is the host Golgi apparatus. The protein localises to the host trans-Golgi network. Its function is as follows. The heterodimer glycoprotein H-glycoprotein L is required for the fusion of viral and plasma membranes leading to virus entry into the host cell. Acts as a functional inhibitor of gH and maintains gH in an inhibited form. Upon binding to host integrins, gL dissociates from gH leading to activation of the viral fusion glycoproteins gB and gH. In human cytomegalovirus, forms two distincts complexes to mediate viral entry, a trimer and a pentamer at the surface of the virion envelope. The gH-gL-gO trimer is required for infection in fibroblasts by interacting with host PDGFRA, and in glioblastoma cells by interacting with host EPHA2. The gH-gL-UL128-UL130-UL131A pentamer is essential for viral entry in epithelial, endothelial and myeloid cells via interaction with host NRP2. This Homo sapiens (Human) protein is Envelope glycoprotein L.